The sequence spans 600 residues: MSTVVQQVPAELQAALTLINNDPRMRTNNAWALSADKRWSLKFTAELSVPCSSFMPDNSVWHLVLWQEETLIRIEVYPDKSEGISATFQHQNYNFSDASTREWTSGNPCLENTPTVFGRNLWGLEPEALLDRISWRLSRLLLWIDAAAQEKLATTGDAVELPAFPDQSPFTVIGFSEQIDDLPFWASKTGEWGFASSTGLPGAHGTLFLREFLDNKGKLIRTTKWSPFMRKGARTTNAVWSVLPTLPVLAPWQAPRTWQELSHCFAQCGLSLPDLFSDIGRSVRALRKQRAPGLLLLGFPLENKIGDEPARIHWLALRLAGLSNTMTKRPGFRPTERNRRTWDREQPLSQEPIRWVRTQNWAADQLRTRGEAANDIRSKKVLIIGAGSLGSMIAENLMRIGVVSQGILDADLLQTGNLSRHALTMTSVGHNKAAALVEHLNRILPDASARSFSCAFPPESEVAKNSLRQYDVIIDCTGDDGVLKSLAAFDWKSEKIFISLAMTWRAEGLFAFAASETSFPVTDASSRFNASASPEIDMDEARIEGIGCWHPVFPARADDVQLWAAVGTKFICRVVSAPGRIYEYFKQMPDGTVEKEPHEY.

Positions 1 to 158 (MSTVVQQVPA…QEKLATTGDA (158 aa)) are E2-like domain. The active-site For E2-like domain is the Cys-109. A linker domain region spans residues 159–373 (VELPAFPDQS…DQLRTRGEAA (215 aa)). Residues 375–600 (DIRSKKVLII…GTVEKEPHEY (226 aa)) form an adenylation plus E1-like domain region. Residue Cys-548 is the For E1-like domain of the active site.

This sequence in the C-terminal section; belongs to the HesA/MoeB/ThiF family. As to quaternary structure, crystallizes as a Cap2 homodimer bound on each side by a CdnD monomer.

In terms of biological role, CD-NTase priming component of a CBASS antiviral system. CBASS (cyclic oligonucleotide-based antiphage signaling system) provides immunity against bacteriophages. The CD-NTase protein (CdnD) synthesizes cyclic nucleotides in response to infection; these serve as specific second messenger signals. The signals activate a diverse range of effectors, leading to bacterial cell death and thus abortive phage infection. A type II-C(AAG) CBASS system. Functionally, primes CdnD; acts as a protein transferase, conjugating CdnD, the CD-NTase, to unidentified target(s) in the cell via an E1-E2 ubiquitin transferase-like mechanism. Upon phage infection CdnD activates and makes cyclic nucleotides. During the conjugation reaction CdnD is transiently attached to AMP. Protein conjugation requires ATP. Its function is as follows. Protects E.coli against phage T2 infection. When the cdnD-cap2-cap3-cap4 operon is introduced in E.coli there is a more than 10(3) decrease in the efficiency of T2 plaque formation. The operon does not protect against phage T5 and only about 10-fold against T7. The chain is ATP-dependent ubiquitin transferase-like protein Cap2 from Enterobacter hormaechei subsp. hoffmannii (strain UCI 50).